The primary structure comprises 937 residues: Isoleucine--tRNA ligase (937 aa).

Residues 58-68 carry the 'HIGH' region motif; sequence PYANGTLHLGH. Glu-561 provides a ligand contact to L-isoleucyl-5'-AMP. The 'KMSKS' region signature appears at 602 to 606; the sequence is KMSKS. Residue Lys-605 participates in ATP binding. The Zn(2+) site is built by Cys-900, Cys-903, Cys-920, and Cys-923.

It belongs to the class-I aminoacyl-tRNA synthetase family. IleS type 1 subfamily. In terms of assembly, monomer. Requires Zn(2+) as cofactor.

It is found in the cytoplasm. It carries out the reaction tRNA(Ile) + L-isoleucine + ATP = L-isoleucyl-tRNA(Ile) + AMP + diphosphate. Its function is as follows. Catalyzes the attachment of isoleucine to tRNA(Ile). As IleRS can inadvertently accommodate and process structurally similar amino acids such as valine, to avoid such errors it has two additional distinct tRNA(Ile)-dependent editing activities. One activity is designated as 'pretransfer' editing and involves the hydrolysis of activated Val-AMP. The other activity is designated 'posttransfer' editing and involves deacylation of mischarged Val-tRNA(Ile). The protein is Isoleucine--tRNA ligase of Histophilus somni (strain 2336) (Haemophilus somnus).